The following is a 112-amino-acid chain: Colipase (112 aa).

An N-terminal signal peptide occupies residues 1-17 (MKVLVVLLVTLVAVAYA). Positions 18–22 (APGPR) are cleaved as a propeptide — enterostatin, activation peptide. 5 disulfide bridges follow: C34–C45, C40–C56, C44–C78, C66–C86, and C80–C104.

This sequence belongs to the colipase family. In terms of assembly, forms a 1:1 stoichiometric complex with pancreatic lipase. In terms of tissue distribution, expressed by the pancreas.

The protein resides in the secreted. Its function is as follows. Colipase is a cofactor of pancreatic lipase. It allows the lipase to anchor itself to the lipid-water interface. Without colipase the enzyme is washed off by bile salts, which have an inhibitory effect on the lipase. In terms of biological role, enterostatin has a biological activity as a satiety signal. This Rattus norvegicus (Rat) protein is Colipase.